Here is a 380-residue protein sequence, read N- to C-terminus: Erythronate-4-phosphate dehydrogenase (380 aa).

2 residues coordinate substrate: Ser-45 and Thr-66. Residues 126 to 127, Asp-146, Thr-174, 205 to 207, and Asp-231 contribute to the NAD(+) site; these read QV and ASR. Arg-207 is an active-site residue. Residue Glu-236 is part of the active site. The active-site Proton donor is the His-253. Position 256 (Gly-256) interacts with NAD(+). Residue Tyr-257 participates in substrate binding.

Belongs to the D-isomer specific 2-hydroxyacid dehydrogenase family. PdxB subfamily. In terms of assembly, homodimer.

It localises to the cytoplasm. The catalysed reaction is 4-phospho-D-erythronate + NAD(+) = (R)-3-hydroxy-2-oxo-4-phosphooxybutanoate + NADH + H(+). It functions in the pathway cofactor biosynthesis; pyridoxine 5'-phosphate biosynthesis; pyridoxine 5'-phosphate from D-erythrose 4-phosphate: step 2/5. In terms of biological role, catalyzes the oxidation of erythronate-4-phosphate to 3-hydroxy-2-oxo-4-phosphonooxybutanoate. In Pseudomonas syringae pv. syringae (strain B728a), this protein is Erythronate-4-phosphate dehydrogenase.